A 187-amino-acid chain; its full sequence is Elongation factor P (187 aa).

The protein belongs to the elongation factor P family.

Its subcellular location is the cytoplasm. It participates in protein biosynthesis; polypeptide chain elongation. Its function is as follows. Involved in peptide bond synthesis. Stimulates efficient translation and peptide-bond synthesis on native or reconstituted 70S ribosomes in vitro. Probably functions indirectly by altering the affinity of the ribosome for aminoacyl-tRNA, thus increasing their reactivity as acceptors for peptidyl transferase. In Treponema denticola (strain ATCC 35405 / DSM 14222 / CIP 103919 / JCM 8153 / KCTC 15104), this protein is Elongation factor P.